The primary structure comprises 194 residues: CASP-like protein 2C1 (194 aa).

Residues 1 to 18 are Cytoplasmic-facing; the sequence is MSSYMEAAAAARAAEAKT. A helical transmembrane segment spans residues 19 to 39; that stretch reads EGLLRGACALLAAAAALLVGL. The Extracellular segment spans residues 40-59; that stretch reads NTQTETVLFIRKKATVKDVQ. Residues 60–80 form a helical membrane-spanning segment; sequence ALWVLAMAAAAAAGYHLLQLL. The Cytoplasmic portion of the chain corresponds to 81–109; the sequence is RCFYLSRFADGKPCRHRRAIAWLCFLLDK. The helical transmembrane segment at 110 to 130 threads the bilayer; it reads GCAYITFATTVAAAQACVVAL. Residues 131-151 are Extracellular-facing; that stretch reads YGTHALQWTKLCNIYTRFCEQ. Residues 152-172 form a helical membrane-spanning segment; the sequence is VAGSLVCAMLAAVGTALLSVV. Residues 173-194 lie on the Cytoplasmic side of the membrane; the sequence is SARNLFRLYPSMLSPPPSSFVG.

The protein belongs to the Casparian strip membrane proteins (CASP) family. Homodimer and heterodimers.

The protein resides in the cell membrane. This Oryza sativa subsp. japonica (Rice) protein is CASP-like protein 2C1.